A 541-amino-acid polypeptide reads, in one-letter code: Nif-specific regulatory protein (541 aa).

The GAF domain occupies 23–158 (RLETTLNNFV…MAANLAGRAI (136 aa)). A disordered region spans residues 170-191 (TFAEEQQEQQNSRDEQSQSSAR). The Sigma-54 factor interaction domain maps to 200–428 (IIGESTALMT…LENCVRRTAT (229 aa)). Residues 228–235 (GETGTGKE) and 291–300 (ANGGTLLLDE) each bind ATP. Residues 429–498 (LARSKTITSS…SAGVASNLIE (70 aa)) are inter-domain linker. A divalent metal cation contacts are provided by Cys-442 and Cys-447. The segment at 499–541 (RDRLISALEEAGWNQAKAARILEKTPRQVGYALRRHGVDVRKL) is C-terminal DNA-binding domain. The segment at residues 513–532 (QAKAARILEKTPRQVGYALR) is a DNA-binding region (H-T-H motif).

Interacts with sigma-54.

Its function is as follows. Required for activation of most nif operons, which are directly involved in nitrogen fixation. This is Nif-specific regulatory protein (nifA) from Rhizobium meliloti (strain 1021) (Ensifer meliloti).